Reading from the N-terminus, the 462-residue chain is Argininosuccinate lyase (462 aa).

This sequence belongs to the lyase 1 family. Argininosuccinate lyase subfamily.

It localises to the cytoplasm. The enzyme catalyses 2-(N(omega)-L-arginino)succinate = fumarate + L-arginine. It participates in amino-acid biosynthesis; L-arginine biosynthesis; L-arginine from L-ornithine and carbamoyl phosphate: step 3/3. The chain is Argininosuccinate lyase from Caldicellulosiruptor saccharolyticus (strain ATCC 43494 / DSM 8903 / Tp8T 6331).